A 238-amino-acid polypeptide reads, in one-letter code: Ankyrin repeat domain-containing protein 49 (238 aa).

A disordered region spans residues 38-57 (TGTQSLWVGNSDEDEEQEEK). S48 carries the post-translational modification Phosphoserine. The segment covering 48 to 57 (SDEDEEQEEK) has biased composition (acidic residues). 4 ANK repeats span residues 72–105 (DPSK…TRDE), 106–135 (DEYT…DVHA), 139–168 (DGWT…DINA), and 172–205 (GLLT…ELKN).

In terms of tissue distribution, expressed in spermatogonia, spermatocytes and round spermatids.

The protein localises to the nucleus. Its function is as follows. May have a role in spermatogenesis where it promotes autophagy in response to serum starvation, via the NF-kappaB pathway. The sequence is that of Ankyrin repeat domain-containing protein 49 (Ankrd49) from Mus musculus (Mouse).